Consider the following 151-residue polypeptide: Large ribosomal subunit protein bL9 (151 aa).

Belongs to the bacterial ribosomal protein bL9 family.

Its function is as follows. Binds to the 23S rRNA. In Prochlorococcus marinus (strain MIT 9215), this protein is Large ribosomal subunit protein bL9.